We begin with the raw amino-acid sequence, 188 residues long: FWLLNVLFPPHTTPKAELSNHTRPVILVPGCLGNPDVVNWMCYRFTIWLDLNMFLPLGVDVPGFGKTYSVEYLDNSKAAPYDWRLEPSQQEEYYLKISLGAPWGGSDLHFEEGWYDLLAGLPAPGVEVYCLYGVGLPTPRXYIFDXGFPYXDPVQQQPVHLLPLPGTQHLNMVFSXQTLEXINAILLG.

An N-linked (GlcNAc...) asparagine glycan is attached at Asn-20. His-169 serves as the catalytic Charge relay system.

This sequence belongs to the AB hydrolase superfamily. Lipase family. In terms of tissue distribution, detected in blood plasma (at protein level).

The protein resides in the secreted. The enzyme catalyses a sterol + a 1,2-diacyl-sn-glycero-3-phosphocholine = a sterol ester + a 1-acyl-sn-glycero-3-phosphocholine. It carries out the reaction a 1-O-alkyl-2-acetyl-sn-glycero-3-phosphocholine + H2O = a 1-O-alkyl-sn-glycero-3-phosphocholine + acetate + H(+). It catalyses the reaction a 1-hexadecanoyl-2-acyl-sn-glycero-3-phosphocholine + (24S)-hydroxycholesterol = (24S)-24-hydroxycholesterol ester + 1-hexadecanoyl-sn-glycero-3-phosphocholine. The catalysed reaction is (24S)-hydroxycholesterol + 1-hexadecanoyl-2-(9Z,12Z-octadecadienoyl)-sn-glycero-3-phosphocholine = (24S)-hydroxycholesterol 3-linoleoate + 1-hexadecanoyl-sn-glycero-3-phosphocholine. The enzyme catalyses 1-hexadecanoyl-2-(5Z,8Z,11Z,14Z-eicosatetraenoyl)-sn-glycero-3-phosphocholine + cholesterol = cholesteryl (5Z,8Z,11Z,14Z)-eicosatetraenoate + 1-hexadecanoyl-sn-glycero-3-phosphocholine. It carries out the reaction 1-hexadecanoyl-2-(9Z-octadecenoyl)-sn-glycero-3-phosphocholine + cholesterol = cholesteryl (9Z-octadecenoate) + 1-hexadecanoyl-sn-glycero-3-phosphocholine. It catalyses the reaction 1-hexadecanoyl-2-(8Z,11Z,14Z-eicosatrienoyl)-sn-glycero-3-phosphocholine + cholesterol = cholesteryl (8Z,11Z,14Z)-eicosatrienoate + 1-hexadecanoyl-sn-glycero-3-phosphocholine. The catalysed reaction is 1-hexadecanoyl-2-(5Z,8Z,11Z-eicosatrienoyl)-sn-glycero-3-phosphocholine + cholesterol = cholesteryl (5Z,8Z,11Z)-eicosatrienoate + 1-hexadecanoyl-sn-glycero-3-phosphocholine. The enzyme catalyses 1-hexadecanoyl-2-(5Z,8Z,11Z,14Z,17Z-eicosapentaenoyl)-sn-glycero-3-phosphocholine + cholesterol = (5Z,8Z,11Z,14Z,17Z-eicosapentaenoyl)-cholesterol + 1-hexadecanoyl-sn-glycero-3-phosphocholine. It carries out the reaction 1-hexadecanoyl-2-(9Z,12Z-octadecadienoyl)-sn-glycero-3-phosphocholine + cholesterol = cholesteryl (9Z,12Z)-octadecadienoate + 1-hexadecanoyl-sn-glycero-3-phosphocholine. It catalyses the reaction 1-hexadecanoyl-2-(6Z,9Z,12Z-octadecatrienoyl)-sn-glycero-3-phosphocholine + cholesterol = (6Z,9Z,12Z-octadecatrienoyl)-cholesterol + 1-hexadecanoyl-sn-glycero-3-phosphocholine. The catalysed reaction is 1-hexadecanoyl-2-(11Z,14Z,17Z-eicosatrienoyl)-sn-glycero-3-phosphocholine + cholesterol = (11Z,14Z,17Z-eicosatrienoyl)-cholesterol + 1-hexadecanoyl-sn-glycero-3-phosphocholine. The enzyme catalyses 1-hexadecanoyl-2-(9Z,12Z,15Z-octadecatrienoyl)-sn-glycero-3-phosphocholine + cholesterol = (9Z,12Z,15Z-octadecatrienoyl)-cholesterol + 1-hexadecanoyl-sn-glycero-3-phosphocholine. It carries out the reaction 1-hexadecanoyl-2-(9Z,12Z-octadecadienoyl)-sn-glycero-3-phosphocholine + H2O = (9Z,12Z)-octadecadienoate + 1-hexadecanoyl-sn-glycero-3-phosphocholine + H(+). It catalyses the reaction 1-hexadecanoyl-2-(5Z,8Z,11Z,14Z-eicosatetraenoyl)-sn-glycero-3-phosphocholine + H2O = 1-hexadecanoyl-sn-glycero-3-phosphocholine + (5Z,8Z,11Z,14Z)-eicosatetraenoate + H(+). The catalysed reaction is a 1-O-alkyl-2-acetyl-sn-glycero-3-phosphocholine + 1-hexadecanoyl-sn-glycero-3-phosphocholine = 1-hexadecanoyl-2-acetyl-sn-glycero-3-phosphocholine + a 1-O-alkyl-sn-glycero-3-phosphocholine. Functionally, central enzyme in the extracellular metabolism of plasma lipoproteins. Synthesized mainly in the liver and secreted into plasma where it converts cholesterol and phosphatidylcholines (lecithins) to cholesteryl esters and lysophosphatidylcholines on the surface of high and low density lipoproteins (HDLs and LDLs). The cholesterol ester is then transported back to the liver. Also produced in the brain by primary astrocytes, and esterifies free cholesterol on nascent APOE-containing lipoproteins secreted from glia and influences cerebral spinal fluid (CSF) APOE- and APOA1 levels. Together with APOE and the cholesterol transporter ABCA1, plays a key role in the maturation of glial-derived, nascent lipoproteins. Required for remodeling high-density lipoprotein particles into their spherical forms. Has a preference for plasma 16:0-18:2 or 18:O-18:2 phosphatidylcholines. Catalyzes the hydrolysis of 1-O-alkyl-2-acetyl-sn-glycero-3-phosphocholine (platelet-activating factor or PAF) to 1-O-alkyl-sn-glycero-3-phosphocholine (lyso-PAF). Also catalyzes the transfer of the acetate group from PAF to 1-hexadecanoyl-sn-glycero-3-phosphocholine forming lyso-PAF. Catalyzes the esterification of (24S)-hydroxycholesterol (24(S)OH-C), also known as cerebrosterol to produce 24(S)OH-C monoesters. The polypeptide is Phosphatidylcholine-sterol acyltransferase (LCAT) (Sus scrofa (Pig)).